The following is a 550-amino-acid chain: MIQRLSHPSLLSLETLFKLCKSEIHLNQIHARIIRKGLEQDQNLISIFISSSSSSSSSLSYSSSVFERVPSPGTYLWNHLIKGYSNKFLFFETVSILMRMMRTGLARPDEYTFPLVMKVCSNNGQVRVGSSVHGLVLRIGFDKDVVVGTSFVDFYGKCKDLFSARKVFGEMPERNAVSWTALVVAYVKSGELEEAKSMFDLMPERNLGSWNALVDGLVKSGDLVNAKKLFDEMPKRDIISYTSMIDGYAKGGDMVSARDLFEEARGVDVRAWSALILGYAQNGQPNEAFKVFSEMCAKNVKPDEFIMVGLMSACSQMGCFELCEKVDSYLHQRMNKFSSHYVVPALIDMNAKCGHMDRAAKLFEEMPQRDLVSYCSMMEGMAIHGCGSEAIRLFEKMVDEGIVPDEVAFTVILKVCGQSRLVEEGLRYFELMRKKYSILASPDHYSCIVNLLSRTGKLKEAYELIKSMPFEAHASAWGSLLGGCSLHGNTEIAEVVARHLFELEPQSAGSYVLLSNIYAALDRWTDVAHLRDKMNENGITKICGRSWISR.

12 PPR repeats span residues glycine 73–arginine 107, aspartate 109–lysine 143, aspartate 144–arginine 174, asparagine 175–arginine 205, asparagine 206–serine 240, tyrosine 241–valine 267, aspartate 268–proline 302, aspartate 303–arginine 333, serine 339–arginine 369, aspartate 370–proline 404, aspartate 405–lysine 435, and serine 441–serine 475. Positions alanine 476–arginine 550 are type E motif.

This sequence belongs to the PPR family. PCMP-E subfamily.

The polypeptide is Putative pentatricopeptide repeat-containing protein At5g37570 (PCMP-E37) (Arabidopsis thaliana (Mouse-ear cress)).